The chain runs to 425 residues: Xyloglucan O-acetyltransferase 2 (425 aa).

Residues 1 to 18 (MGSPFKDHHTLHPSLVRK) lie on the Cytoplasmic side of the membrane. A helical; Signal-anchor for type II membrane protein transmembrane segment spans residues 19 to 38 (LIPWTFYAMVPLVLFRVYLY). Over 39 to 425 (PYPLHHTTTT…KWEYASRREQ (387 aa)) the chain is Lumenal. 4 disulfides stabilise this stretch: C68-C118, C89-C154, C98-C398, and C313-C394. N-linked (GlcNAc...) asparagine glycosylation is present at N85. A GDS motif motif is present at residues 141–143 (GDS). S143 acts as the Nucleophile in catalysis. N-linked (GlcNAc...) asparagine glycosylation is found at N183 and N259. D393 (proton donor) is an active-site residue. Positions 393–396 (DCVH) match the DXXH motif motif. Residue H396 is the Proton acceptor of the active site.

The protein belongs to the PC-esterase family. TBL subfamily.

It localises to the golgi apparatus membrane. Its function is as follows. Xyloglucan acetyltransferase that catalyzes the acetylation of fucosylated Gal residues on xyloglucan side chains. Predominantly catalyze 6-O-monoacetylation of Gal residues in the Fuc-Gal-Xyl trisaccharide side chains of xyloglucan oligomers. In Populus trichocarpa (Western balsam poplar), this protein is Xyloglucan O-acetyltransferase 2.